The sequence spans 194 residues: Calcium channel flower (194 aa).

Residues 1–34 (MSFAEKITGLLARPNQQDPIGPEQPWYLKYGSRL) lie on the Cytoplasmic side of the membrane. Residues 35–55 (LGIVAAFFAILFGLWNVFSII) form a helical membrane-spanning segment. Residues 56 to 65 (TLSVSCLVAG) are Extracellular-facing. Residues 66–88 (ILQMVAGFVVMLLEAPCCFVCFG) form a helical membrane-spanning segment. The Cytoplasmic portion of the chain corresponds to 89 to 106 (QVNEIAEKVESKPLYFRA). A helical membrane pass occupies residues 107–127 (GLYIAMAIPPIILCFGLASLF). Topologically, residues 128–194 (GSGLIFGTGV…TGAVGTDSNV (67 aa)) are extracellular. Important for promoting apoptosis regions lie at residues 135–157 (TGVVYGMMALGKKASAEDMRAAA) and 135–192 (TGVV…GTDS).

The protein belongs to the calcium channel flower family. Associates with the dally/ magu complex. As to quaternary structure, homomultimer. Associates with the dally/ magu complex. Detected in the imaginal wing disk (at protein level). In terms of tissue distribution, detected throughout the adult brain, including the optic lobe but, at much lower levels of expression than isoform Lose-A. As to expression, detected in the optic lobe (at protein level). Detected throughout the adult brain, including the optic lobe. Expressed in damaged and undamaged optic lobe neurons. Expressed in optic lobe neurons, with higher levels of expression in suboptimal neurons. Specifically expressed in injury-damaged optic lobe neurons.

The protein localises to the cell membrane. The protein resides in the cytoplasmic vesicle. It localises to the secretory vesicle. It is found in the synaptic vesicle membrane. Its subcellular location is the presynaptic cell membrane. The protein localises to the endosome. The protein resides in the synaptic vesicle. With respect to regulation, channel activity is inhibited by La(3+), which reduces Ca(2+) influx and thus inhibits it's function in promoting activity-dependent bulk endocytosis (ADBE) in response to high stimuli. In terms of biological role, transmembrane protein which mediates synaptic endocytosis, fitness-based cell culling, neuronal culling, morphogen gradient scaling, and calcium transport. Regulates synaptic endocytosis and hence couples exo- with endocytosis. Controls two major modes of synaptic vesicle (SV) endocytosis in the synaptic boutons of neuromuscular junctions (NMJs); Ca(2+) channel-independent Clathrin-mediated endocytosis (CME) in response to mild stimulation, and Ca(2+) channel-dependent activity-dependent bulk endocytosis (ADBE) in response to strong stimulation. Functions in ADBE and subsequent SV reformation from bulk endosomes by initiating Ca(2+) channel-dependent phosphatidylinositol 4,5-bisphosphate (PtdIns(4,5)P2) compartmentalization in synaptic boutons. There it acts at the periactive zone to provide the low Ca(2+) levels required to initiate Calcineurin activation and upregulate PtdIns(4,5)P2. Conversely PtdIns(4,5)P2 enhances fwe Ca(2+) channel-activity, establishing a positive feedback loop that induces PtdIns(4,5)P2 microdomain at the periactive zone. These microdomains trigger bulk membrane invagination (i.e. ADBE) by triggering actin polymerization while also promoting localization of fwe to bulk endosomes, thereby removing the ADBE trigger to reduce endocytosis and prevent excess membrane uptake. PtdIns(4,5)P2 then promotes SV reformation from the bulk endosomes, to coordinate ADBE and subsequent SV reformation. Different combinations of the flower isoforms at the cell membrane are also required for the identification and elimination of suboptimal or supernumerary cells during development, regeneration, and adulthood. Required for the recognition and elimination of unfit cells in the developing wing during cell competition. Also required for efficient identification and elimination of injured, damaged and/or dysfunctional neurons during regeneration of the adult brain. In the developing pupal retina, mediates the elimination of unwanted postmitotic neurons, including supernumerary photoreceptor neurons that form at the periphery of the retina and are contained within incomplete ommatidia units. Downstream of the flower fitness fingerprints, cells identified as unwanted or unfit are eliminated via apoptosis through the expression of ahuizotl (azot). However, the cells marked for elimination by the flower isoforms only undergo apoptosis if additional thresholds are met; (1) their neighboring fit/healthy cells express different levels of the fwe isoforms, and (2) the levels of the protective signal SPARC expressed by the loser or unwanted cells are unable to inhibit caspase activation. These additional thresholds for flower-mediated apoptosis, allows useful cells to recover from transient and limited stress before they are unnecessarily eliminated. Functions with dally and magu in a mechanism of scaling, which utilises apoptosis to ensure that the dpp morphogen gradient, which mediates organ growth, remains proportional to the size of the growing wing. In this mechanism, fwe represses dally- and Magu-dependent activity in expanding the gradient, and dally/Magu inhibits fwe-dependent apoptosis to keep cell death rate low. When the levels of these different proteins are optimally regulated the gradient correctly scales with organ growth but when this fails, fwe-mediated apoptosis is activated to trim the developing tissue to match the correct size of the gradient. Its function is as follows. Functions with the other flower isoforms to produce tissue-specific fitness fingerprints that identify unfit or fit cells during cell selection processes in order to maintain tissue health. In the wing imaginal disk, this isoform is highly expressed in healthy/normal cells but is down-regulated in cells with decreased fitness. During cell competition, if levels of this isoform in unfit cells is lower than in the surrounding neighboring cells, the suboptimal cells are recognized as 'loser' cells, and undergo elimination via apoptosis to be replaced by the surrounding healthy 'winner' cell population. Functions with the other flower isoforms to produce tissue-specific fitness fingerprints that identify unfit or fit cells during cell selection processes in order to maintain tissue health. In the wing imaginal disk, this isoform displays low levels of expression in healthy/normal cells but is up-regulated in cells with decreased fitness. During cell competition, if levels of this isoform in unfit cells is higher than in the surrounding neighboring cells, the suboptimal cells are recognized as 'loser' cells, and undergo elimination via apoptosis to be replaced by the surrounding healthy 'winner' cell population. Functionally, functions with the other flower isoforms to produce tissue-specific fitness fingerprints that identify unfit cells for cell selection processes during development, regeneration, and to maintain tissue health. During cell competition in certain tissues, marks suboptimal or damaged cells as 'loser' cells. In cells of the wing imaginal disk and damaged or dysfunctional neurons in the adult optic lobe, this isoform displays low to no expression in healthy/normal cells but is up-regulated in cells with decreased fitness or damage-affected neurons. During cell competition, if levels of this isoform in unfit cells is higher than in the surrounding neighboring cells, the suboptimal cells are recognized as 'loser' cells, and undergo elimination via apoptosis to be replaced by the surrounding healthy/undamaged 'winner' cell population. In the developing pupal retina, also required for the recognition and elimination of postmitotic neurons, including supernumerary photoreceptor neurons that form at the periphery of the retina and are contained within incomplete ommatidia units. Activity at the peripheral retina is induced by the wg signaling pathway but, once activated, it promotes apoptosis of supernumerary photoreceptor neurons independently of wg signaling and snail function. This chain is Calcium channel flower (fwe), found in Drosophila melanogaster (Fruit fly).